A 963-amino-acid polypeptide reads, in one-letter code: Protocadherin alpha-C1 (963 aa).

Residues 1 to 18 form the signal peptide; it reads MVGWGVAVLCLWVSCGAA. Cadherin domains follow at residues 19-124, 125-233, 234-340, 349-445, and 446-555; these read AGQL…SPLF, PAGD…APVF, ERSV…APEL, VPED…TPSF, and PQPQ…YPVI. Residues 19–683 are Extracellular-facing; it reads AGQLEYSVPE…GGQLSAQNLY (665 aa). A glycan (N-linked (GlcNAc...) asparagine) is linked at asparagine 38. N-linked (GlcNAc...) asparagine glycosylation is found at asparagine 248 and asparagine 274. N-linked (GlcNAc...) asparagine glycosylation occurs at asparagine 562. The region spanning 570–667 is the Cadherin 6 domain; it reads VPRSARTGHL…NSVPQLLPDF (98 aa). The chain crosses the membrane as a helical span at residues 684 to 704; sequence LVIALACISFLFLGCLLFFVC. Residues 705–963 lie on the Cytoplasmic side of the membrane; that stretch reads TKLHQSPGCC…GNSTTDNSDQ (259 aa). PXXP repeat units follow at residues 812-815, 845-848, 886-889, and 904-907; these read PRQP, PGGP, PGNP, and PGSP. A 4 X 4 AA repeats of P-X-X-P region spans residues 812 to 907; it reads PRQPNPDWRY…PDKFIIPGSP (96 aa). Positions 844 to 902 are disordered; sequence GPGGPDQQWPTVSSATPEPEAGEVSPPVGAGVNSNSWTFKYGPGNPKQSGPGELPDKFI. The disordered stretch occupies residues 914-963; the sequence is QEPANSQIDKSDFITFGKKEETKKKKKKKKGNKTQEKKEKGNSTTDNSDQ. Residues 922–936 are compositionally biased toward basic and acidic residues; that stretch reads DKSDFITFGKKEETK.

It is found in the cell membrane. Potential calcium-dependent cell-adhesion protein. May be involved in the establishment and maintenance of specific neuronal connections in the brain. The chain is Protocadherin alpha-C1 (PCDHAC1) from Pan troglodytes (Chimpanzee).